The primary structure comprises 375 residues: Transaldolase (375 aa).

Residue K145 is the Schiff-base intermediate with substrate of the active site.

The protein belongs to the transaldolase family. Type 2 subfamily.

Its subcellular location is the cytoplasm. The enzyme catalyses D-sedoheptulose 7-phosphate + D-glyceraldehyde 3-phosphate = D-erythrose 4-phosphate + beta-D-fructose 6-phosphate. It participates in carbohydrate degradation; pentose phosphate pathway; D-glyceraldehyde 3-phosphate and beta-D-fructose 6-phosphate from D-ribose 5-phosphate and D-xylulose 5-phosphate (non-oxidative stage): step 2/3. Transaldolase is important for the balance of metabolites in the pentose-phosphate pathway. In Mycobacterium leprae (strain Br4923), this protein is Transaldolase.